The primary structure comprises 175 residues: ATP synthase subunit b (175 aa).

A helical membrane pass occupies residues 20 to 40; sequence LIFWTAITFVIVLLILKKIAW.

The protein belongs to the ATPase B chain family. As to quaternary structure, F-type ATPases have 2 components, F(1) - the catalytic core - and F(0) - the membrane proton channel. F(1) has five subunits: alpha(3), beta(3), gamma(1), delta(1), epsilon(1). F(0) has four main subunits: a(1), b(2) and c(10-14). The alpha and beta chains form an alternating ring which encloses part of the gamma chain. F(1) is attached to F(0) by a central stalk formed by the gamma and epsilon chains, while a peripheral stalk is formed by the delta and b chains.

It localises to the cell inner membrane. In terms of biological role, f(1)F(0) ATP synthase produces ATP from ADP in the presence of a proton or sodium gradient. F-type ATPases consist of two structural domains, F(1) containing the extramembraneous catalytic core and F(0) containing the membrane proton channel, linked together by a central stalk and a peripheral stalk. During catalysis, ATP synthesis in the catalytic domain of F(1) is coupled via a rotary mechanism of the central stalk subunits to proton translocation. Functionally, component of the F(0) channel, it forms part of the peripheral stalk, linking F(1) to F(0). The protein is ATP synthase subunit b of Chlorobium chlorochromatii (strain CaD3).